The following is a 320-amino-acid chain: Eukaryotic translation initiation factor 3 subunit G (320 aa).

The segment at 1-60 (MPTGDFDSKPSWADQVEEEGEDDKCVTSELLKGIPLPTGDTSPEPELLPGDPLPPPKEVI) is disordered. S8 and S11 each carry phosphoserine. A phosphothreonine mark is found at T38 and T41. Phosphoserine occurs at positions 42, 189, 223, and 264. Positions 205 to 233 (AAQNKTGKYVPPSLRDGASRRGESMQPNR) are disordered. A compositionally biased stretch (basic and acidic residues) spans 221 to 233 (GASRRGESMQPNR). In terms of domain architecture, RRM spans 239–317 (ATIRVTNLSE…LILNVEWAKP (79 aa)).

It belongs to the eIF-3 subunit G family. Component of the eukaryotic translation initiation factor 3 (eIF-3) complex, which is composed of 13 subunits: EIF3A, EIF3B, EIF3C, EIF3D, EIF3E, EIF3F, EIF3G, EIF3H, EIF3I, EIF3J, EIF3K, EIF3L and EIF3M. The eIF-3 complex appears to include 3 stable modules: module A is composed of EIF3A, EIF3B, EIF3G and EIF3I; module B is composed of EIF3F, EIF3H, and EIF3M; and module C is composed of EIF3C, EIF3D, EIF3E, EIF3K and EIF3L. EIF3C of module C binds EIF3B of module A and EIF3H of module B, thereby linking the three modules. EIF3J is a labile subunit that binds to the eIF-3 complex via EIF3B. The eIF-3 complex interacts with RPS6KB1 under conditions of nutrient depletion. Mitogenic stimulation leads to binding and activation of a complex composed of MTOR and RPTOR, leading to phosphorylation and release of RPS6KB1 and binding of EIF4B to eIF-3. Interacts (via C-terminus) with AIFM1 (via N-terminus). Interacts with DHX33; the interaction is independent of RNA. In terms of processing, phosphorylated. Phosphorylation is enhanced upon serum stimulation.

The protein resides in the cytoplasm. It is found in the nucleus. It localises to the perinuclear region. In terms of biological role, RNA-binding component of the eukaryotic translation initiation factor 3 (eIF-3) complex, which is required for several steps in the initiation of protein synthesis. The eIF-3 complex associates with the 40S ribosome and facilitates the recruitment of eIF-1, eIF-1A, eIF-2:GTP:methionyl-tRNAi and eIF-5 to form the 43S pre-initiation complex (43S PIC). The eIF-3 complex stimulates mRNA recruitment to the 43S PIC and scanning of the mRNA for AUG recognition. The eIF-3 complex is also required for disassembly and recycling of post-termination ribosomal complexes and subsequently prevents premature joining of the 40S and 60S ribosomal subunits prior to initiation. The eIF-3 complex specifically targets and initiates translation of a subset of mRNAs involved in cell proliferation, including cell cycling, differentiation and apoptosis, and uses different modes of RNA stem-loop binding to exert either translational activation or repression. This subunit can bind 18S rRNA. The sequence is that of Eukaryotic translation initiation factor 3 subunit G (Eif3g) from Rattus norvegicus (Rat).